Consider the following 248-residue polypeptide: tRNA1(Val) (adenine(37)-N6)-methyltransferase (248 aa).

It belongs to the methyltransferase superfamily. tRNA (adenine-N(6)-)-methyltransferase family.

Its subcellular location is the cytoplasm. It carries out the reaction adenosine(37) in tRNA1(Val) + S-adenosyl-L-methionine = N(6)-methyladenosine(37) in tRNA1(Val) + S-adenosyl-L-homocysteine + H(+). Specifically methylates the adenine in position 37 of tRNA(1)(Val) (anticodon cmo5UAC). This chain is tRNA1(Val) (adenine(37)-N6)-methyltransferase, found in Yersinia pseudotuberculosis serotype O:1b (strain IP 31758).